We begin with the raw amino-acid sequence, 374 residues long: Protein TAB2 homolog, chloroplastic (374 aa).

A chloroplast-targeting transit peptide spans 1–64; the sequence is MATLGFNTRR…SLSITKEQEV (64 aa). A disordered region spans residues 58-84; the sequence is ITKEQEVANEVEEDDPTSELSYLDPES. Acidic residues predominate over residues 64 to 74; the sequence is VANEVEEDDPT.

It is found in the plastid. The protein resides in the chloroplast. Its function is as follows. Nuclear genome-encoded A/U-rich RNA-binding protein involved in the biogenesis of photosystem I (PSI) and II (PSII). Required for the light-controlled accumulation of PSI and PSII during early plant development. Does not seem to be required for the translation of mRNAs of the PSI subunits. The chain is Protein TAB2 homolog, chloroplastic from Arabidopsis thaliana (Mouse-ear cress).